Consider the following 270-residue polypeptide: D-aminoacyl-tRNA deacylase (270 aa).

The protein belongs to the DtdA deacylase family. As to quaternary structure, monomer. Requires Zn(2+) as cofactor.

The catalysed reaction is a D-aminoacyl-tRNA + H2O = a tRNA + a D-alpha-amino acid + H(+). The enzyme catalyses glycyl-tRNA(Ala) + H2O = tRNA(Ala) + glycine + H(+). Functionally, D-aminoacyl-tRNA deacylase with broad substrate specificity. By recycling D-aminoacyl-tRNA to D-amino acids and free tRNA molecules, this enzyme counteracts the toxicity associated with the formation of D-aminoacyl-tRNA entities in vivo. The polypeptide is D-aminoacyl-tRNA deacylase (Pyrococcus furiosus (strain ATCC 43587 / DSM 3638 / JCM 8422 / Vc1)).